The sequence spans 122 residues: Neuropeptide B (122 aa).

Positions 1–24 (MAGPAMLVAAALALCLLLASPGLA) are cleaved as a signal peptide. Trp25 bears the 6'-bromotryptophan mark. Residues 56–122 (SEPRGGTRSL…LSLSASDCRK (67 aa)) constitute a propeptide that is removed on maturation.

This sequence belongs to the neuropeptide B/W family.

The protein localises to the secreted. May be involved in the regulation of feeding, neuroendocrine system, memory, learning and in the afferent pain pathway. The protein is Neuropeptide B (NPB) of Bos taurus (Bovine).